The following is a 344-amino-acid chain: Small ribosomal subunit biogenesis GTPase RsgA (344 aa).

The CP-type G domain occupies 100–268; sequence KNELSRPDYY…LIDSPGIREF (169 aa). Residues 156–159 and 210–218 contribute to the GTP site; these read NKID and GQSGVGKSS. Residues Cys292, Cys297, His299, and Cys305 each contribute to the Zn(2+) site.

Belongs to the TRAFAC class YlqF/YawG GTPase family. RsgA subfamily. As to quaternary structure, monomer. Associates with 30S ribosomal subunit, binds 16S rRNA. The cofactor is Zn(2+).

The protein resides in the cytoplasm. Functionally, one of several proteins that assist in the late maturation steps of the functional core of the 30S ribosomal subunit. Helps release RbfA from mature subunits. May play a role in the assembly of ribosomal proteins into the subunit. Circularly permuted GTPase that catalyzes slow GTP hydrolysis, GTPase activity is stimulated by the 30S ribosomal subunit. This is Small ribosomal subunit biogenesis GTPase RsgA from Actinobacillus pleuropneumoniae serotype 5b (strain L20).